Here is an 89-residue protein sequence, read N- to C-terminus: Bacterial microcompartment shell vertex protein GrpN (89 aa).

Residues 1–83 (MYLGKVIGTV…IDAAVVGIVD (83 aa)) form the BMV domain.

Belongs to the CcmL/EutN family. In terms of assembly, homopentamer with a small central pore.

The protein localises to the bacterial microcompartment. In terms of biological role, probably forms vertices in the bacterial microcompartment (BMC) predicted to be involved in glycyl radical-based 1,2-propanediol metabolism in this organism. The polypeptide is Bacterial microcompartment shell vertex protein GrpN (Rhodospirillum rubrum (strain F11)).